Consider the following 514-residue polypeptide: tRNA-2-methylthio-N(6)-dimethylallyladenosine synthase (514 aa).

The MTTase N-terminal domain maps to 68-186 (RTFLIKTYGC…LPEILEEAYL (119 aa)). [4Fe-4S] cluster-binding residues include C77, C113, C147, C223, C227, and C230. A Radical SAM core domain is found at 209-439 (RDGHIKAWVN…NKKVGIYSQQ (231 aa)). Residues 442 to 505 (SQYEGKIVTV…QYSLNGTFIQ (64 aa)) enclose the TRAM domain.

It belongs to the methylthiotransferase family. MiaB subfamily. As to quaternary structure, monomer. [4Fe-4S] cluster is required as a cofactor.

It localises to the cytoplasm. It carries out the reaction N(6)-dimethylallyladenosine(37) in tRNA + (sulfur carrier)-SH + AH2 + 2 S-adenosyl-L-methionine = 2-methylsulfanyl-N(6)-dimethylallyladenosine(37) in tRNA + (sulfur carrier)-H + 5'-deoxyadenosine + L-methionine + A + S-adenosyl-L-homocysteine + 2 H(+). In terms of biological role, catalyzes the methylthiolation of N6-(dimethylallyl)adenosine (i(6)A), leading to the formation of 2-methylthio-N6-(dimethylallyl)adenosine (ms(2)i(6)A) at position 37 in tRNAs that read codons beginning with uridine. The sequence is that of tRNA-2-methylthio-N(6)-dimethylallyladenosine synthase from Staphylococcus epidermidis (strain ATCC 35984 / DSM 28319 / BCRC 17069 / CCUG 31568 / BM 3577 / RP62A).